The sequence spans 200 residues: 3-isopropylmalate dehydratase small subunit (200 aa).

Belongs to the LeuD family. LeuD type 1 subfamily. Heterodimer of LeuC and LeuD.

The catalysed reaction is (2R,3S)-3-isopropylmalate = (2S)-2-isopropylmalate. It functions in the pathway amino-acid biosynthesis; L-leucine biosynthesis; L-leucine from 3-methyl-2-oxobutanoate: step 2/4. Functionally, catalyzes the isomerization between 2-isopropylmalate and 3-isopropylmalate, via the formation of 2-isopropylmaleate. The chain is 3-isopropylmalate dehydratase small subunit from Pectobacterium carotovorum subsp. carotovorum (strain PC1).